A 320-amino-acid polypeptide reads, in one-letter code: Pyrroline-5-carboxylate reductase 1, mitochondrial (320 aa).

S2 bears the N-acetylserine mark. NADP(+) is bound by residues 6–11 (IGAGQL) and S34. NADPH-binding residues include A8, Q10, L11, S34, D36, N56, V70, K71, and A97. NADP(+) contacts are provided by residues N56, 69–72 (AVKP), and 95–97 (CAA). Residue E164 coordinates L-proline. NADPH is bound at residue N230. The L-proline site is built by A237 and T238. S278 is modified (phosphoserine). Residues 292–320 (LDSPPGTSLAPSGHSKLLPRSMAPAGKQD) form a disordered region.

Belongs to the pyrroline-5-carboxylate reductase family. Homodecamer; composed of 5 homodimers. Interacts with LTO1.

The protein resides in the mitochondrion. It catalyses the reaction L-proline + NADP(+) = (S)-1-pyrroline-5-carboxylate + NADPH + 2 H(+). It carries out the reaction L-proline + NAD(+) = (S)-1-pyrroline-5-carboxylate + NADH + 2 H(+). Its pathway is amino-acid biosynthesis; L-proline biosynthesis; L-proline from L-glutamate 5-semialdehyde: step 1/1. Oxidoreductase that catalyzes the last step in proline biosynthesis, which corresponds to the reduction of pyrroline-5-carboxylate to L-proline using NAD(P)H. At physiologic concentrations, has higher specific activity in the presence of NADH. Involved in the cellular response to oxidative stress. The sequence is that of Pyrroline-5-carboxylate reductase 1, mitochondrial (PYCR1) from Bos taurus (Bovine).